The following is a 465-amino-acid chain: Spermidine/putrescine import ATP-binding protein PotA (465 aa).

Over residues 1–18 the composition is skewed to polar residues; sequence MTATSGARTSDARTSGAR. The segment at 1 to 21 is disordered; the sequence is MTATSGARTSDARTSGARTSD. The ABC transporter domain maps to 30-264; sequence IELVGVAKDY…PRTRFVAGFI (235 aa). 66-73 contributes to the ATP binding site; sequence GPSGCGKS.

The protein belongs to the ABC transporter superfamily. Spermidine/putrescine importer (TC 3.A.1.11.1) family. The complex is composed of two ATP-binding proteins (PotA), two transmembrane proteins (PotB and PotC) and a solute-binding protein (PotD).

It is found in the cell membrane. It catalyses the reaction ATP + H2O + polyamine-[polyamine-binding protein]Side 1 = ADP + phosphate + polyamineSide 2 + [polyamine-binding protein]Side 1.. Its function is as follows. Part of the ABC transporter complex PotABCD involved in spermidine/putrescine import. Responsible for energy coupling to the transport system. This is Spermidine/putrescine import ATP-binding protein PotA from Frankia alni (strain DSM 45986 / CECT 9034 / ACN14a).